A 286-amino-acid chain; its full sequence is Deleted in azoospermia-like-A (286 aa).

The 82-residue stretch at 33 to 114 (NTVFVGGIDI…PAIRKICTYV (82 aa)) folds into the RRM domain. In terms of domain architecture, DAZ spans 155–180 (ACPYPSSPPMAIQQIPVGCQQPGYFQ).

This sequence belongs to the RRM DAZ family. Interacts with the C-terminus of pabp1 and with epabp. Prior to oocyte maturation, found in a complex with epabp and pum2 proteins and spdy1 mRNA; pum2 dissociates from the complex during maturation. In terms of tissue distribution, germ-line specific. Oocyte mRNA expression is first restricted to the granulo-fibrillar material (GFM) of the mitochondrial cloud and then to the oocyte germ plasm at the vegetal cortex. Remains an mRNA component of the germ plasm until the neurula stage. In 2-8 cell embryos, expressed in the germ plasm matrix between germinal granules and mitochondria. Expressed in primordial germ cells (PGCs) later in embryogenesis. In addition to the ovaries of adult females, expressed in the testis of adult and juvenile males in spermatogonia and spermatocytes. The protein is restricted to the embryonic germ plasm and primordial germ cells.

The protein resides in the cytoplasm. Functionally, RNA-binding protein that is required for primordial germ cell (PGC) differentiation and indirectly necessary for the migration of PGCs through the endoderm. May promote meiotic cell division during spermatogenesis. Shows a preference for G- and U-rich RNAs and probably binds the 3'-UTR of target mRNAs. Stimulates the initiation of translation of mRNAs through the recruitment of poly(A)-binding proteins (PABPs). This chain is Deleted in azoospermia-like-A (dazl-a), found in Xenopus laevis (African clawed frog).